Consider the following 291-residue polypeptide: Filament protein FIN1 (291 aa).

S54 carries the post-translational modification Phosphoserine. Residue T68 is modified to Phosphothreonine. Phosphoserine is present on residues S74 and S88. A coiled-coil region spans residues 254–284 (VELKEIKDLLLQMLRRQREIESRLSNIELQL).

In terms of assembly, homooligomer; in vitro, FIN1 self-assembles into 10 nm diameter filaments. Interacts with the 14-3-3 proteins BMH1 and BMH2, and the protein phosphatase 1 complex catalytic subunit GLC7. In terms of processing, phosphorylated by CDC28. Phosphorylation is required for BMH1 and BMH2 interaction. Dephosphorylation by GLC7 depends on the presence of BMH1 and BMH2.

It localises to the nucleus. The protein localises to the cytoplasm. The protein resides in the cytoskeleton. Its subcellular location is the spindle pole. In terms of biological role, forms cell-cycle specific filaments between the spindle pole bodies of dividing yeast cells. The sequence is that of Filament protein FIN1 (FIN1) from Saccharomyces cerevisiae (strain ATCC 204508 / S288c) (Baker's yeast).